We begin with the raw amino-acid sequence, 364 residues long: Phosphoserine aminotransferase (364 aa).

An L-glutamate-binding site is contributed by Arg40. Pyridoxal 5'-phosphate is bound by residues 74–75 (GT), Trp100, Thr149, Asp170, and Gln193. Lys194 is modified (N6-(pyridoxal phosphate)lysine). Residue 235–236 (NT) coordinates pyridoxal 5'-phosphate.

This sequence belongs to the class-V pyridoxal-phosphate-dependent aminotransferase family. SerC subfamily. In terms of assembly, homodimer. Pyridoxal 5'-phosphate is required as a cofactor. In terms of tissue distribution, expressed in ovary and head.

The enzyme catalyses O-phospho-L-serine + 2-oxoglutarate = 3-phosphooxypyruvate + L-glutamate. It carries out the reaction 4-(phosphooxy)-L-threonine + 2-oxoglutarate = (R)-3-hydroxy-2-oxo-4-phosphooxybutanoate + L-glutamate. It participates in amino-acid biosynthesis; L-serine biosynthesis; L-serine from 3-phospho-D-glycerate: step 2/3. The protein operates within cofactor biosynthesis; pyridoxine 5'-phosphate biosynthesis; pyridoxine 5'-phosphate from D-erythrose 4-phosphate: step 3/5. Its function is as follows. Catalyzes the reversible conversion of 3-phosphohydroxypyruvate to phosphoserine and of 3-hydroxy-2-oxo-4-phosphonooxybutanoate to phosphohydroxythreonine. This Drosophila melanogaster (Fruit fly) protein is Phosphoserine aminotransferase.